The chain runs to 394 residues: Phloroisovalerophenone synthase (394 aa).

The active site involves Cys-166.

Belongs to the thiolase-like superfamily. Chalcone/stilbene synthases family. In terms of assembly, homodimer. As to expression, expressed in lupulin gland. Present at low levels in leaves but accumulates in cones.

It catalyses the reaction 3-methylbutanoyl-CoA + 3 malonyl-CoA + 3 H(+) = phlorisovalerophenone + 3 CO2 + 4 CoA. The catalysed reaction is (E)-4-coumaroyl-CoA + 3 malonyl-CoA + 3 H(+) = 2',4,4',6'-tetrahydroxychalcone + 3 CO2 + 4 CoA. The enzyme catalyses 2-methylpropanoyl-CoA + 3 malonyl-CoA + 3 H(+) = phlorisobutanophenone + 3 CO2 + 4 CoA. It participates in secondary metabolite biosynthesis. Involved in the biosynthesis of prenylated phenolics natural products which contribute to the bitter taste of beer and display broad biological activities. Polyketide synthase that can use 3-methylbutanoyl-CoA (isovaleryl-CoA) and 2-methylpropanoyl-CoA (isobutyryl-CoA) as substrates to produce phlorisovalerophenone (PIVP) and phlorisobutyrophenone (2-methyl-1-(2,4,6-trihydroxyphenyl)propan-1-one), respectively, intermediates in the biosynthesis of the bitter acids (alpha and beta) acids. Can also produce naringenin-chalcone (2',4,4',6'-tetrahydroxychalcone) from 4-coumaroyl-CoA with a lower efficiency. The sequence is that of Phloroisovalerophenone synthase from Humulus lupulus (European hop).